The primary structure comprises 686 residues: DNA ligase 2 (686 aa).

Residues 37–41, 86–87, and glutamate 121 contribute to the NAD(+) site; these read DDEYD and SL. Residue lysine 123 is the N6-AMP-lysine intermediate of the active site. NAD(+) contacts are provided by arginine 144, glutamate 179, lysine 295, and lysine 319. Zn(2+)-binding residues include cysteine 413, cysteine 416, cysteine 431, and cysteine 436. The BRCT domain maps to 593–681; it reads VRGEQLAGLN…GVQLPGVQAS (89 aa).

It belongs to the NAD-dependent DNA ligase family. LigA subfamily. The cofactor is Mg(2+). Mn(2+) is required as a cofactor.

The enzyme catalyses NAD(+) + (deoxyribonucleotide)n-3'-hydroxyl + 5'-phospho-(deoxyribonucleotide)m = (deoxyribonucleotide)n+m + AMP + beta-nicotinamide D-nucleotide.. In terms of biological role, DNA ligase that catalyzes the formation of phosphodiester linkages between 5'-phosphoryl and 3'-hydroxyl groups in double-stranded DNA using NAD as a coenzyme and as the energy source for the reaction. It is essential for DNA replication and repair of damaged DNA. In Deinococcus deserti (strain DSM 17065 / CIP 109153 / LMG 22923 / VCD115), this protein is DNA ligase 2.